The primary structure comprises 208 residues: Small ribosomal subunit protein uS4 (208 aa).

Residues 98–158 (SRLDNAVYRL…EKSRNMQVID (61 aa)) enclose the S4 RNA-binding domain.

This sequence belongs to the universal ribosomal protein uS4 family. In terms of assembly, part of the 30S ribosomal subunit. Contacts protein S5. The interaction surface between S4 and S5 is involved in control of translational fidelity.

One of the primary rRNA binding proteins, it binds directly to 16S rRNA where it nucleates assembly of the body of the 30S subunit. Its function is as follows. With S5 and S12 plays an important role in translational accuracy. The chain is Small ribosomal subunit protein uS4 from Desulfosudis oleivorans (strain DSM 6200 / JCM 39069 / Hxd3) (Desulfococcus oleovorans).